Consider the following 1331-residue polypeptide: Probable serine/threonine-protein kinase DDB_G0272254 (1331 aa).

Low complexity-rich tracts occupy residues 1 to 42 (METS…NSSS), 96 to 116 (NDNN…NNNN), and 153 to 175 (TQQT…STPS). 3 disordered regions span residues 1–43 (METS…SSSA), 92–132 (DKIC…QQIS), and 150–175 (ILNT…STPS). 2 consecutive transmembrane segments (helical) span residues 201–221 (FGFS…IYIL) and 224–244 (FVLK…FVIY). The span at 259–287 (SINDSDSSSNNNNNNNNTTTTNNDSASTK) shows a compositional bias: low complexity. 4 disordered regions span residues 259-300 (SIND…PETY), 320-419 (NLNN…LSKE), 435-464 (SVGK…SHNI), and 512-581 (AHSN…VVGN). Positions 288-299 (GNNNNEISSPET) are enriched in polar residues. The segment covering 436–450 (VGKTHNRSSSGSDSI) has biased composition (polar residues). Over residues 514–531 (SNNNNNNNNSNTNNNNNN) the composition is skewed to low complexity. Over residues 532–555 (QSVSAPVSQLATPVYQTPGTNSVV) the composition is skewed to polar residues. Residues 557 to 577 (NLENDNENNNDSFSDINDNNS) show a composition bias toward low complexity. Kelch repeat units lie at residues 665–710 (SLVL…NHDY), 716–769 (KFYL…RYGN), 770–816 (RFLL…GHTS), 822–868 (KLII…ELND), 909–959 (NIVM…LIKN), and 962–1008 (KLFI…NNNN). Residues 834-860 (NNNNNNNNNNNNNNNNNNNNNNNNNNN) show a composition bias toward low complexity. A disordered region spans residues 834–862 (NNNNNNNNNNNNNNNNNNNNNNNNNNNKG). Residues 976 to 1042 (NNNSSSGGNN…NNNNNNNNNN (67 aa)) form a disordered region. Residues 1073–1331 (IKIDKEIGKG…EITNYLTKTF (259 aa)) enclose the Protein kinase domain. ATP is bound by residues 1079 to 1087 (IGKGHFSKV) and lysine 1100. Aspartate 1200 serves as the catalytic Proton acceptor.

The protein belongs to the protein kinase superfamily. TKL Ser/Thr protein kinase family.

The protein localises to the membrane. It carries out the reaction L-seryl-[protein] + ATP = O-phospho-L-seryl-[protein] + ADP + H(+). The catalysed reaction is L-threonyl-[protein] + ATP = O-phospho-L-threonyl-[protein] + ADP + H(+). The polypeptide is Probable serine/threonine-protein kinase DDB_G0272254 (Dictyostelium discoideum (Social amoeba)).